The following is a 385-amino-acid chain: Selenoprotein P (385 aa).

A signal peptide spans 1-19 (MWRSLGLALALCLLPYGGA). Sec59 is a non-standard amino acid (selenocysteine). Positions 59–62 (UYLC) form a cross-link, cysteinyl-selenocysteine (Sec-Cys); in isoform Se-P1. N-linked (GlcNAc...) asparagine glycosylation is found at Asn83, Asn174, and Asn188. 2 disulfide bridges follow: Cys168–Cys186 and Cys172–Cys175. The segment at 196-262 (KTTEPSEEHN…KGQHRQGHLE (67 aa)) is disordered. The span at 243-258 (LHHHHHHHKHKGQHRQ) shows a compositional bias: basic residues. Position 264 (Sec264) is a non-standard amino acid, selenocysteine. Ser269 carries the phosphoserine modification. Non-standard amino acids (selenocysteine) are located at Sec282, Sec323, Sec335, and Sec357. Residues 357–385 (UHSQHVSPTEASPNUSUNNKTKKUKUNLN) form a disordered region. Positions 360-369 (QHVSPTEASP) are enriched in polar residues. Residue Thr365 is glycosylated (O-linked (Hex...) threonine; partial). Residues Sec371, Sec373, Sec380, and Sec382 are each a non-standard amino acid (selenocysteine). The span at 376 to 385 (KTKKUKUNLN) shows a compositional bias: basic residues.

It belongs to the selenoprotein P family. Isoform Se-P1 contains several disulfide bridges and a selenide-sulfide bond between Sec-59 and Cys-62. These bonds are speculated to serve as redox-active pairs. In terms of processing, phosphorylation sites are present in the extracellular medium. Widely expressed, mainly by the liver. Secreted in plasma.

It localises to the secreted. Functionally, might be responsible for some of the extracellular antioxidant defense properties of selenium or might be involved in the transport of selenium. May supply selenium to tissues such as brain and testis. This chain is Selenoprotein P, found in Rattus norvegicus (Rat).